The sequence spans 457 residues: Neuropeptide receptor npr-1 (457 aa).

The Extracellular segment spans residues 1–22 (MEVENFTDCQVYWKVYPDPSQS). Residues 23 to 43 (IYAIVPFLTVYLFLFFLGLFG) form a helical membrane-spanning segment. Topologically, residues 44–62 (NVTLIYVTCSHKALLSVQN) are cytoplasmic. A helical transmembrane segment spans residues 63–83 (IFILNLAASDCMMCILSLPIT). The Extracellular segment spans residues 84-100 (PITNVYKNWYFGNLLCH). C99 and C178 are joined by a disulfide. Residues 101 to 121 (LIPCIQGISIFVCTFSLGAIA) form a helical membrane-spanning segment. At 122–140 (LDRYILVVRPHSTPLSQRG) the chain is on the cytoplasmic side. The chain crosses the membrane as a helical span at residues 141 to 161 (AFLTTVLLWILSFVVTLPYAF). Residues 162 to 193 (NMQMIEYTEERICGYFCTEKWESAKSRRAYTM) are Extracellular-facing. Residues 194-214 (IVMLAQFVVPFAVMAFCYANI) form a helical membrane-spanning segment. Residues 215–279 (VSVLSKRAQT…LQNRRTTSIL (65 aa)) are Cytoplasmic-facing. Residues 280–300 (VTMVVWFGITWLPHNVISLII) traverse the membrane as a helical segment. Residues 301 to 324 (EYDDTQSFFRLYGRDDYDISYLLN) are Extracellular-facing. A helical transmembrane segment spans residues 325-345 (LFTHSIAMSNNVLNPVLYAWL). At 346–457 (NPSFRQLVIK…IEFSVNDTLV (112 aa)) the chain is on the cytoplasmic side.

Belongs to the G-protein coupled receptor 1 family. In terms of tissue distribution, expressed in neurons, including neurons in the head, the ventral nerve cord, and the preanal ganglion.

The protein resides in the membrane. Functionally, G-protein coupled receptor for FARP(FMRFamide related peptide) neuropeptides. Activated by FARP neuropeptides flp-18 and flp-21. Plays a role in modulating social and feeding behavior. Required to modulate locomotion quiescence during the sleep-like state called lethargus, which occurs during molting between larval and adult stages, in part by regulating touch sensitivity. The protein is Neuropeptide receptor npr-1 of Caenorhabditis elegans.